The primary structure comprises 424 residues: Serine--tRNA ligase (424 aa).

232–234 contacts L-serine; it reads TAE. 263–265 provides a ligand contact to ATP; the sequence is RSE. Residue E286 coordinates L-serine. 350–353 contributes to the ATP binding site; the sequence is EISS. S385 lines the L-serine pocket.

Belongs to the class-II aminoacyl-tRNA synthetase family. Type-1 seryl-tRNA synthetase subfamily. Homodimer. The tRNA molecule binds across the dimer.

The protein resides in the cytoplasm. The enzyme catalyses tRNA(Ser) + L-serine + ATP = L-seryl-tRNA(Ser) + AMP + diphosphate + H(+). It catalyses the reaction tRNA(Sec) + L-serine + ATP = L-seryl-tRNA(Sec) + AMP + diphosphate + H(+). Its pathway is aminoacyl-tRNA biosynthesis; selenocysteinyl-tRNA(Sec) biosynthesis; L-seryl-tRNA(Sec) from L-serine and tRNA(Sec): step 1/1. Functionally, catalyzes the attachment of serine to tRNA(Ser). Is also able to aminoacylate tRNA(Sec) with serine, to form the misacylated tRNA L-seryl-tRNA(Sec), which will be further converted into selenocysteinyl-tRNA(Sec). The polypeptide is Serine--tRNA ligase (Latilactobacillus sakei subsp. sakei (strain 23K) (Lactobacillus sakei subsp. sakei)).